The primary structure comprises 533 residues: Chromosomal replication initiator protein DnaA (533 aa).

The interval 1–72 (MNDFWQHCSA…DLARDFWNAP (72 aa)) is domain I, interacts with DnaA modulators. A domain II region spans residues 72–196 (PIEVQFVLDP…EAADSMYERS (125 aa)). The segment at 83–113 (AGQRSPAGATPLAPRAPLPSANPAPVAPGPA) is disordered. Residues 96–110 (PRAPLPSANPAPVAP) show a composition bias toward pro residues. The tract at residues 197–413 (KLNPVLTFDN…GALRKILAYS (217 aa)) is domain III, AAA+ region. ATP is bound by residues Gly241, Gly243, Lys244, and Thr245. Residues 414–533 (KFHGREITIE…LHVLEQTLKG (120 aa)) form a domain IV, binds dsDNA region.

It belongs to the DnaA family. As to quaternary structure, oligomerizes as a right-handed, spiral filament on DNA at oriC.

Its subcellular location is the cytoplasm. Plays an essential role in the initiation and regulation of chromosomal replication. ATP-DnaA binds to the origin of replication (oriC) to initiate formation of the DNA replication initiation complex once per cell cycle. Binds the DnaA box (a 9 base pair repeat at the origin) and separates the double-stranded (ds)DNA. Forms a right-handed helical filament on oriC DNA; dsDNA binds to the exterior of the filament while single-stranded (ss)DNA is stabiized in the filament's interior. The ATP-DnaA-oriC complex binds and stabilizes one strand of the AT-rich DNA unwinding element (DUE), permitting loading of DNA polymerase. After initiation quickly degrades to an ADP-DnaA complex that is not apt for DNA replication. Binds acidic phospholipids. In Burkholderia mallei (strain SAVP1), this protein is Chromosomal replication initiator protein DnaA.